A 331-amino-acid polypeptide reads, in one-letter code: Phosphate acyltransferase (331 aa).

This sequence belongs to the PlsX family. As to quaternary structure, homodimer. Probably interacts with PlsY.

It localises to the cytoplasm. It carries out the reaction a fatty acyl-[ACP] + phosphate = an acyl phosphate + holo-[ACP]. Its pathway is lipid metabolism; phospholipid metabolism. Catalyzes the reversible formation of acyl-phosphate (acyl-PO(4)) from acyl-[acyl-carrier-protein] (acyl-ACP). This enzyme utilizes acyl-ACP as fatty acyl donor, but not acyl-CoA. In Ureaplasma parvum serovar 3 (strain ATCC 27815 / 27 / NCTC 11736), this protein is Phosphate acyltransferase.